An 892-amino-acid polypeptide reads, in one-letter code: Protein BNI4 (892 aa).

A phosphoserine mark is found at Ser-43 and Ser-133. 2 disordered regions span residues 185-287 (DFLS…EDTS) and 305-387 (KPVI…QDTE). The segment covering 208–223 (TILERDNNLPVKREEN) has biased composition (basic and acidic residues). Composition is skewed to polar residues over residues 224–236 (TIINSETESTTHS) and 270–280 (DSSAQRTTSAG). A Phosphoserine modification is found at Ser-281. Polar residues predominate over residues 309–335 (GNNSVTNEKNKMSSSSTFSMNIQTSLK). Residues 346–356 (SSSSIFNSFLK) are compositionally biased toward low complexity. Basic and acidic residues predominate over residues 357 to 371 (GKIETSDSPRKEPMR). A phosphoserine mark is found at Ser-364 and Ser-394. Position 410 is a phosphothreonine (Thr-410). 3 positions are modified to phosphoserine: Ser-476, Ser-500, and Ser-503. 3 disordered regions span residues 506 to 526 (RTRSTKSNKRSSMNSQRRSLT), 618 to 644 (SDEEKTEVERDVPKPREEPLKKDSERQ), and 685 to 734 (YATE…GDER). Phosphoserine is present on Ser-618. Positions 624-643 (EVERDVPKPREEPLKKDSER) are enriched in basic and acidic residues. Thr-703 bears the Phosphothreonine mark. The segment covering 707–719 (RNNKEDSYKERET) has biased composition (basic and acidic residues). 2 positions are modified to phosphoserine: Ser-746 and Ser-825.

May interact with CHS3 and seems to be an adapter (along with SKT5) to link CHS3 to septins.

The polypeptide is Protein BNI4 (BNI4) (Saccharomyces cerevisiae (strain ATCC 204508 / S288c) (Baker's yeast)).